The primary structure comprises 831 residues: MutS protein homolog 5 (831 aa).

A disordered region spans residues 1-43; it reads MAFRATPGRTPPGPGPGVPSASFSSPQPAMAAPGGIEEEDEEE. 589 to 596 is a binding site for ATP; it reads GPNSSGKS.

Belongs to the DNA mismatch repair MutS family. In terms of assembly, heterooligomer of MSH4 and MSH5. Interacts with HJURP. Interacts with C7h12orf40/REDIC1.

In terms of biological role, involved in DNA mismatch repair and meiotic recombination processes. Facilitates crossovers between homologs during meiosis. This is MutS protein homolog 5 (Msh5) from Rattus norvegicus (Rat).